The chain runs to 165 residues: uncharacterized protein (165 aa).

This is an uncharacterized protein from Acanthamoeba polyphaga mimivirus (APMV).